Reading from the N-terminus, the 93-residue chain is Neutrophil cationic peptide 2 (93 aa).

The N-terminal stretch at 1-19 is a signal peptide; it reads MRTVPLFAACLLLTLMAQA. The propeptide occupies 20 to 62; the sequence is EPLPRAADHSDTKMKGDREDHVAVISFWEEESTSLQDAGAGAG. Cystine bridges form between Cys-65–Cys-93, Cys-67–Cys-82, and Cys-72–Cys-92.

The protein belongs to the alpha-defensin family.

Its subcellular location is the secreted. Functionally, has antibiotic, anti-fungi and antiviral activity. This chain is Neutrophil cationic peptide 2, found in Cavia porcellus (Guinea pig).